We begin with the raw amino-acid sequence, 448 residues long: Adenylosuccinate synthetase (448 aa).

GTP contacts are provided by residues G22 to K28 and G50 to T52. Residue D23 is the Proton acceptor of the active site. Mg(2+)-binding residues include D23 and G50. IMP contacts are provided by residues D23–K26, N48–H51, T139, R153, Q234, T249, and R321. H51 (proton donor) is an active-site residue. S317–R323 contributes to the substrate binding site. Residues R323, K349–D351, and S431–G433 each bind GTP.

Belongs to the adenylosuccinate synthetase family. As to quaternary structure, homodimer. It depends on Mg(2+) as a cofactor.

It localises to the cytoplasm. The enzyme catalyses IMP + L-aspartate + GTP = N(6)-(1,2-dicarboxyethyl)-AMP + GDP + phosphate + 2 H(+). It participates in purine metabolism; AMP biosynthesis via de novo pathway; AMP from IMP: step 1/2. Its function is as follows. Plays an important role in the de novo pathway of purine nucleotide biosynthesis. Catalyzes the first committed step in the biosynthesis of AMP from IMP. This chain is Adenylosuccinate synthetase, found in Burkholderia thailandensis (strain ATCC 700388 / DSM 13276 / CCUG 48851 / CIP 106301 / E264).